Reading from the N-terminus, the 216-residue chain is MKINTVLFDLDGTLINTNELIISSFLHTLHTYYPNQYKREDVLPFIGPSLHDTFSKIDESKVEELITSYRQFNHDHHDELVEEYETVYETVQELKKQGYKVGIVTTKARQTVEMGLKLSKLDEFFDVVVTIDDVEHVKPHPEPLQKALQLLDAKPEEALMVGDNHHDIVGGQNAGTKTAAVSWTLKGRAYLETYKPDFMLDKMSDLLPILSDMNRS.

Aspartate 9 serves as the catalytic Nucleophile.

The protein belongs to the HAD-like hydrolase superfamily. PpaX family. It depends on Mg(2+) as a cofactor.

The enzyme catalyses diphosphate + H2O = 2 phosphate + H(+). In terms of biological role, hydrolyzes pyrophosphate formed during P-Ser-HPr dephosphorylation by HPrK/P. Might play a role in controlling the intracellular pyrophosphate pool. This chain is Pyrophosphatase PpaX, found in Bacillus anthracis (strain CDC 684 / NRRL 3495).